Consider the following 573-residue polypeptide: DEAD-box ATP-dependent RNA helicase 47B (573 aa).

Residues 131-159 (KSFEELGLPPLLIDRLNKEGLSTPTEVQS) carry the Q motif motif. Residues 162 to 362 (IPIISQKHDA…RSWGHDPVLV (201 aa)) form the Helicase ATP-binding domain. 175–182 (SYTGSGKT) contacts ATP. The short motif at 293 to 296 (DEVD) is the DEAD box element. The Helicase C-terminal domain occupies 421 to 565 (TLRRCIHALE…PCEFTEGKLL (145 aa)).

It belongs to the DEAD box helicase family.

The enzyme catalyses ATP + H2O = ADP + phosphate + H(+). This chain is DEAD-box ATP-dependent RNA helicase 47B, found in Oryza sativa subsp. japonica (Rice).